The sequence spans 438 residues: Dolichyl-diphosphooligosaccharide--protein glycosyltransferase 48 kDa subunit (438 aa).

A signal peptide spans 1 to 25; it reads MASLRLSVLLVSVSWLLLLVSGLRA. Topologically, residues 26-408 are lumenal; sequence GPRTLVLMEN…QYERFIPSAY (383 aa). Residues 409 to 429 traverse the membrane as a helical segment; it reads PYYASAFSVMFGLFIFSIVFL. Residues 430–438 lie on the Cytoplasmic side of the membrane; it reads HMKEKEKSD.

This sequence belongs to the DDOST 48 kDa subunit family. As to quaternary structure, component of the oligosaccharyltransferase (OST) complex.

It is found in the endoplasmic reticulum membrane. It functions in the pathway protein modification; protein glycosylation. Functionally, subunit of the oligosaccharyl transferase (OST) complex that catalyzes the initial transfer of a defined glycan (Glc(3)Man(9)GlcNAc(2) in eukaryotes) from the lipid carrier dolichol-pyrophosphate to an asparagine residue within an Asn-X-Ser/Thr consensus motif in nascent polypeptide chains, the first step in protein N-glycosylation. N-glycosylation occurs cotranslationally and the complex associates with the Sec61 complex at the channel-forming translocon complex that mediates protein translocation across the endoplasmic reticulum (ER). All subunits are required for a maximal enzyme activity. Required for the assembly of both SST3A- and SS3B-containing OST complexes. This Xenopus laevis (African clawed frog) protein is Dolichyl-diphosphooligosaccharide--protein glycosyltransferase 48 kDa subunit.